The sequence spans 213 residues: N-(5'-phosphoribosyl)anthranilate isomerase (213 aa).

Belongs to the TrpF family.

It catalyses the reaction N-(5-phospho-beta-D-ribosyl)anthranilate = 1-(2-carboxyphenylamino)-1-deoxy-D-ribulose 5-phosphate. Its pathway is amino-acid biosynthesis; L-tryptophan biosynthesis; L-tryptophan from chorismate: step 3/5. This is N-(5'-phosphoribosyl)anthranilate isomerase from Roseiflexus sp. (strain RS-1).